A 1527-amino-acid chain; its full sequence is Lysophospholipase nte1 (1527 aa).

Residues Met1–Gly73 lie on the Cytoplasmic side of the membrane. A helical membrane pass occupies residues Trp74 to Ile94. Residues Thr95–Thr116 lie on the Lumenal side of the membrane. The chain crosses the membrane as a helical span at residues Met117–Ile137. Residues Arg138–Ile1527 are Cytoplasmic-facing. Residues Gly299–Ser310 are compositionally biased toward low complexity. 3 disordered regions span residues Gly299–Ser387, Asp567–Asp596, and Ala765–Ser785. Polar residues predominate over residues Arg364–Ser377. A nucleoside 3',5'-cyclic phosphate-binding positions include Gly682 to Ser809 and Arg846 to Arg966. One can recognise a PNPLA domain in the interval Leu1224–Lys1388. Positions Gly1228–Gly1233 match the GXGXXG motif. Positions Gly1255 to Gly1259 match the GXSXG motif. Ser1257 (nucleophile) is an active-site residue. Asp1375 serves as the catalytic Proton acceptor. A DGA/G motif is present at residues Asp1375–Gly1377. The disordered stretch occupies residues Leu1504–Ile1527.

It belongs to the NTE family.

It is found in the endoplasmic reticulum membrane. It catalyses the reaction a 1-acyl-sn-glycero-3-phosphocholine + H2O = sn-glycerol 3-phosphocholine + a fatty acid + H(+). Inhibited by organophosphorus esters. In terms of biological role, intracellular phospholipase B that catalyzes the double deacylation of phosphatidylcholine (PC) to glycerophosphocholine (GroPCho). Plays an important role in membrane lipid homeostasis. Responsible for the rapid PC turnover in response to inositol, elevated temperatures, or when choline is present in the growth medium. This is Lysophospholipase nte1 (nte1) from Emericella nidulans (strain FGSC A4 / ATCC 38163 / CBS 112.46 / NRRL 194 / M139) (Aspergillus nidulans).